We begin with the raw amino-acid sequence, 151 residues long: Probable cGMP 3',5'-cyclic phosphodiesterase subunit delta (151 aa).

The protein belongs to the PDE6D/unc-119 family. As to quaternary structure, interacts with Pde6.

The protein localises to the nucleus. It is found in the cytoplasm. The sequence is that of Probable cGMP 3',5'-cyclic phosphodiesterase subunit delta from Drosophila erecta (Fruit fly).